Consider the following 297-residue polypeptide: Phenylalanine-4-hydroxylase (297 aa).

Fe cation is bound by residues histidine 138, histidine 143, and glutamate 184.

Belongs to the biopterin-dependent aromatic amino acid hydroxylase family. As to quaternary structure, monomer. The cofactor is Fe(2+).

The enzyme catalyses (6R)-L-erythro-5,6,7,8-tetrahydrobiopterin + L-phenylalanine + O2 = (4aS,6R)-4a-hydroxy-L-erythro-5,6,7,8-tetrahydrobiopterin + L-tyrosine. The protein operates within amino-acid degradation; L-phenylalanine degradation; acetoacetate and fumarate from L-phenylalanine: step 1/6. The polypeptide is Phenylalanine-4-hydroxylase (phhA) (Chromobacterium violaceum (strain ATCC 12472 / DSM 30191 / JCM 1249 / CCUG 213 / NBRC 12614 / NCIMB 9131 / NCTC 9757 / MK)).